Consider the following 562-residue polypeptide: Probable malate:quinone oxidoreductase (562 aa).

The segment at 535–562 (SATPADPTIAPKNQHSTTYNANSEMQAL) is disordered. The segment covering 545-562 (PKNQHSTTYNANSEMQAL) has biased composition (polar residues).

It belongs to the MQO family. FAD serves as cofactor.

It carries out the reaction (S)-malate + a quinone = a quinol + oxaloacetate. Its pathway is carbohydrate metabolism; tricarboxylic acid cycle; oxaloacetate from (S)-malate (quinone route): step 1/1. This Xylella fastidiosa (strain M23) protein is Probable malate:quinone oxidoreductase.